The chain runs to 308 residues: Apolipoprotein E (308 aa).

An N-terminal signal peptide occupies residues 1–18 (MKFLWAALVVTLLAGCRA). Tandem repeats lie at residues 75 to 96 (LLIE…KQVG), 97 to 118 (PIAQ…ARLE), 119 to 140 (SDME…AALG), 141 to 162 (QNTD…KRLL), 163 to 184 (RDAE…EAAE), 185 to 206 (RGVS…LQAI), 207 to 224 (PPSQ…QKVR), and 225 to 246 (GRLE…DQME). Residues 75–246 (LLIEETMKEV…RLDDMRDQME (172 aa)) are 8 X 22 AA approximate tandem repeats. Positions 153–163 (HLRKLRKRLLR) are LDL and other lipoprotein receptors binding. 157–160 (LRKR) is a binding site for heparin. A lipid-binding and lipoprotein association region spans residues 205 to 281 (AIPPSQQLRE…SWFEPLVQDM (77 aa)). Residue 220–227 (GQKVRGRL) participates in heparin binding. Residues 257–308 (SQVRLQAEAFQTRLKSWFEPLVQDMQRQWASLVEKVQSTLGISPSTKPSKTK) form a homooligomerization region. Residues 269 to 281 (RLKSWFEPLVQDM) are specificity for association with VLDL.

It belongs to the apolipoprotein A1/A4/E family. As to quaternary structure, homotetramer. May interact with ABCA1; functionally associated with ABCA1 in the biogenesis of HDLs. May interact with APP/A4 amyloid-beta peptide; the interaction is extremely stable in vitro but its physiological significance is unclear. May interact with MAPT. May interact with MAP2. In the cerebrospinal fluid, interacts with secreted SORL1. Interacts with PMEL; this allows the loading of PMEL luminal fragment on ILVs to induce fibril nucleation. Post-translationally, APOE exists as multiple glycosylated and sialylated glycoforms within cells and in plasma. The extent of glycosylation and sialylation are tissue and context specific. Glycated in plasma VLDL. In terms of processing, phosphorylated by FAM20C in the extracellular medium.

The protein localises to the secreted. It localises to the extracellular space. The protein resides in the extracellular matrix. It is found in the extracellular vesicle. Its subcellular location is the endosome. The protein localises to the multivesicular body. In terms of biological role, APOE is an apolipoprotein, a protein associating with lipid particles, that mainly functions in lipoprotein-mediated lipid transport between organs via the plasma and interstitial fluids. APOE is a core component of plasma lipoproteins and is involved in their production, conversion and clearance. Apolipoproteins are amphipathic molecules that interact both with lipids of the lipoprotein particle core and the aqueous environment of the plasma. As such, APOE associates with chylomicrons, chylomicron remnants, very low density lipoproteins (VLDL) and intermediate density lipoproteins (IDL) but shows a preferential binding to high-density lipoproteins (HDL). It also binds a wide range of cellular receptors including the LDL receptor/LDLR and the very low-density lipoprotein receptor/VLDLR that mediate the cellular uptake of the APOE-containing lipoprotein particles. Finally, APOE also has a heparin-binding activity and binds heparan-sulfate proteoglycans on the surface of cells, a property that supports the capture and the receptor-mediated uptake of APOE-containing lipoproteins by cells. In Pteropus pselaphon (Bonin flying fox), this protein is Apolipoprotein E (APOE).